We begin with the raw amino-acid sequence, 289 residues long: Poly-beta-1,6-N-acetyl-D-glucosamine N-deacetylase (289 aa).

Positions 1-30 are cleaved as a signal peptide; it reads MKPFKLIFISALMILIMTNATPISHLNAQA. The region spanning 113 to 289 is the NodB homology domain; that stretch reads RSVWINFDDM…KEWDGFDEEK (177 aa).

It belongs to the polysaccharide deacetylase family.

The protein localises to the secreted. It is found in the cell wall. Functionally, catalyzes the N-deacetylation of poly-beta-1,6-N-acetyl-D-glucosamine (PNAG, also referred to as PIA), a biofilm adhesin polysaccharide. In fact, the IcaB deacetylase converts 15 to 20% of the GlcNAc residues of PNAG to glucosamine. N-deacetylation is crucial for attachment of the polysaccharide to the bacterial cell surface; it leads to the introduction of positive charges in the otherwise neutral PIA polymer, allowing electrostatic interactions. Deacetylation of the polymer is also essential for key virulence mechanisms of S.epidermidis, namely biofilm formation, colonization, and resistance to neutrophil phagocytosis and human antibacterial peptides. The protein is Poly-beta-1,6-N-acetyl-D-glucosamine N-deacetylase (icaB) of Staphylococcus epidermidis (strain ATCC 35984 / DSM 28319 / BCRC 17069 / CCUG 31568 / BM 3577 / RP62A).